Consider the following 247-residue polypeptide: MNVLPCSINTLKGLYDISGVEVGQHFYWQIGGFQVHAQVLITSWVVIAILLGSATIAVRNPQTIPTDGQNFFEYVLEFIRDLSKTQIGEEYGPWVPFIGTMFLFIFVSNWSGALLPRKIIQLPHGELAAPTNDINTTVALALPTSMAYFYAGFTKKGLSYFGKYIQPTPILLPINILEDFTKPLSLSFRLFGNILADELVVVVLVSLVPSVVPIPVMFLGLFTSGIQALIFATLAAAYIGESMEGHH.

5 consecutive transmembrane segments (helical) span residues 38–58 (QVLI…TIAV), 95–115 (VPFI…GALL), 134–154 (INTT…AGFT), 199–219 (LVVV…VMFL), and 220–240 (GLFT…AYIG).

Belongs to the ATPase A chain family. In terms of assembly, F-type ATPases have 2 components, CF(1) - the catalytic core - and CF(0) - the membrane proton channel. CF(1) has five subunits: alpha(3), beta(3), gamma(1), delta(1), epsilon(1). CF(0) has four main subunits: a, b, b' and c.

It is found in the plastid. The protein localises to the chloroplast thylakoid membrane. Functionally, key component of the proton channel; it plays a direct role in the translocation of protons across the membrane. The chain is ATP synthase subunit a, chloroplastic from Liriodendron tulipifera (Tuliptree).